The sequence spans 251 residues: Zinc import ATP-binding protein ZnuC (251 aa).

The ABC transporter domain maps to 5–220 (VSLENVSVSF…PEFISMFGPR (216 aa)). Residue 37 to 44 (GPNGAGKS) participates in ATP binding.

Belongs to the ABC transporter superfamily. Zinc importer (TC 3.A.1.15.5) family. The complex is composed of two ATP-binding proteins (ZnuC), two transmembrane proteins (ZnuB) and a solute-binding protein (ZnuA).

Its subcellular location is the cell inner membrane. It catalyses the reaction Zn(2+)(out) + ATP(in) + H2O(in) = Zn(2+)(in) + ADP(in) + phosphate(in) + H(+)(in). Its function is as follows. Part of the ABC transporter complex ZnuABC involved in zinc import. Responsible for energy coupling to the transport system. The protein is Zinc import ATP-binding protein ZnuC of Salmonella typhi.